The following is a 325-amino-acid chain: Protease HtpX homolog (325 aa).

The helical transmembrane segment at 20–40 (IGYLLGGGGGMMIALVIAVAM) threads the bilayer. Position 130 (His-130) interacts with Zn(2+). Glu-131 is an active-site residue. Residue His-134 coordinates Zn(2+). The next 2 membrane-spanning stretches (helical) occupy residues 145–165 (IVAT…FLGG) and 173–193 (VMGV…AMIV). Glu-202 lines the Zn(2+) pocket. A disordered region spans residues 286–325 (SAAMTARAAAPSQNSGPWGQRSDNAGGNSNGGSRYRGPWS). The span at 306–325 (RSDNAGGNSNGGSRYRGPWS) shows a compositional bias: low complexity.

It belongs to the peptidase M48B family. Requires Zn(2+) as cofactor.

The protein localises to the cell inner membrane. This is Protease HtpX homolog from Brucella melitensis biotype 2 (strain ATCC 23457).